Here is a 445-residue protein sequence, read N- to C-terminus: F-box protein At5g10340 (445 aa).

The region spanning 64–112 is the F-box domain; sequence SMEELLPHDVIEYHIMVRLDVKTLLKFKSVSKQWMSTIQSPSFQERQLI.

This is F-box protein At5g10340 from Arabidopsis thaliana (Mouse-ear cress).